We begin with the raw amino-acid sequence, 363 residues long: Ribosome-binding ATPase YchF (363 aa).

Positions 3 to 256 (FKCGIVGLPN…LDDEEKVEFL (254 aa)) constitute an OBG-type G domain. An ATP-binding site is contributed by 12 to 17 (NVGKST). Positions 16 and 36 each coordinate Mg(2+). Residues 278-361 (NLQTYFTAGV…QDGDVMHFRF (84 aa)) form the TGS domain.

It depends on Mg(2+) as a cofactor.

Functionally, ATPase that binds to both the 70S ribosome and the 50S ribosomal subunit in a nucleotide-independent manner. Does not hydrolyze GTP. This Haemophilus influenzae (strain ATCC 51907 / DSM 11121 / KW20 / Rd) protein is Ribosome-binding ATPase YchF.